A 469-amino-acid chain; its full sequence is GDP-fucose protein O-fucosyltransferase 2 (469 aa).

Residues Met1 to Arg18 form the signal peptide. GDP-beta-L-fucose-binding positions include Gly56–Asn60, His277–Arg279, and Arg373–Phe374. Glu57 acts as the Proton acceptor in catalysis.

Belongs to the glycosyltransferase 68 family.

Its subcellular location is the endoplasmic reticulum. It carries out the reaction L-seryl-[protein] + GDP-beta-L-fucose = 3-O-(alpha-L-fucosyl)-L-seryl-[protein] + GDP + H(+). It catalyses the reaction L-threonyl-[protein] + GDP-beta-L-fucose = 3-O-(alpha-L-fucosyl)-L-threonyl-[protein] + GDP + H(+). It functions in the pathway protein modification; protein glycosylation. Its function is as follows. Catalyzes the reaction that attaches fucose through an O-glycosidic linkage to a conserved serine or threonine residue in the consensus sequence C1-X-X-S/T-C2 of thrombospondin type I repeats (TSRs) where C1 and C2 are the first and second cysteines of the repeat, respectively. O-fucosylates sporozoite proteins CSP and TRAP. O-fucosylation regulates stability and intracellular trafficking of TRAP but not of CSP. Probably by regulating protein O-fucosylation, may play a role in parasite transmission to the mosquito vector and/or infection of the vertebrate host hepatocytes; however, POFUT2 involvement in transmission/infection is controversial. The polypeptide is GDP-fucose protein O-fucosyltransferase 2 (Plasmodium falciparum (isolate NF54)).